The primary structure comprises 118 residues: Fluoride-specific ion channel FluC 2 (118 aa).

The next 4 helical transmembrane spans lie at 1–21 (MIEALLVATGGFFGAITRFAI), 33–53 (FPLATFLINITGAFLLGYIIG), 55–75 (GVTTGWQLLLGTGFMGAFTTF), and 91–111 (ISTFLLYLSATYIIGILFAFL). Glycine 70 and threonine 73 together coordinate Na(+).

It belongs to the fluoride channel Fluc/FEX (TC 1.A.43) family.

The protein localises to the cell membrane. The enzyme catalyses fluoride(in) = fluoride(out). Its activity is regulated as follows. Na(+) is not transported, but it plays an essential structural role and its presence is essential for fluoride channel function. Functionally, fluoride-specific ion channel. Important for reducing fluoride concentration in the cell, thus reducing its toxicity. The protein is Fluoride-specific ion channel FluC 2 of Bacillus cereus (strain ATCC 14579 / DSM 31 / CCUG 7414 / JCM 2152 / NBRC 15305 / NCIMB 9373 / NCTC 2599 / NRRL B-3711).